The sequence spans 393 residues: Probable acetyl-CoA acyltransferase (393 aa).

Cys88 acts as the Acyl-thioester intermediate in catalysis. Catalysis depends on proton acceptor residues His349 and Cys378.

The protein belongs to the thiolase-like superfamily. Thiolase family.

Its subcellular location is the cytoplasm. It catalyses the reaction 2 acetyl-CoA = acetoacetyl-CoA + CoA. The chain is Probable acetyl-CoA acyltransferase from Staphylococcus aureus (strain MRSA252).